Consider the following 215-residue polypeptide: LysM and putative peptidoglycan-binding domain-containing protein 2 (215 aa).

Residues 1 to 40 (MADLSPAPALREGGPRAHRPSAPSPPPRSRSTSEPEEAEL) form a disordered region. The residue at position 2 (A2) is an N-acetylalanine. Residues S5, S24, S33, and S57 each carry the phosphoserine modification. One can recognise a LysM domain in the interval 71-115 (VEHRVRAGDTLQGIALKYGVTMEQIKRANKLFTNDCIFLKKTLSI). Disordered regions lie at residues 135–176 (ESET…EVSA) and 195–215 (RKLKEESRDEESPYAASLYHS). The span at 145 to 156 (QEEEPVVSEEEL) shows a compositional bias: acidic residues. The span at 157 to 169 (PPPSPQDPDPKPA) shows a compositional bias: pro residues. A compositionally biased stretch (basic and acidic residues) spans 196-205 (KLKEESRDEE).

The polypeptide is LysM and putative peptidoglycan-binding domain-containing protein 2 (Lysmd2) (Mus musculus (Mouse)).